An 82-amino-acid chain; its full sequence is Turripeptide IX-23 (82 aa).

The N-terminal stretch at 1 to 23 (MMAKLMITVMMVLLLSLQQGADG) is a signal peptide. The propeptide occupies 24-50 (RSERWRKNQMAASSIMRNLITARIDPP). 3 disulfide bridges follow: C53–C68, C58–C72, and C64–C79.

Belongs to the Pg turripeptide superfamily. In terms of tissue distribution, expressed by the venom duct.

It is found in the secreted. This is Turripeptide IX-23 from Gemmula speciosa (Splendid gem-turris).